The sequence spans 547 residues: Oncoprotein-induced transcript 3 protein (547 aa).

The N-terminal stretch at 1–19 (MPQLLLLACLLIIVTRVAP) is a signal peptide. N-linked (GlcNAc...) asparagine glycans are attached at residues Asn89 and Asn116. In terms of domain architecture, EGF-like; calcium-binding spans 182-222 (DENECEQNNGGCSEICVNLKNSYRCECGIGRVLRSDGKTCE). 3 cysteine pairs are disulfide-bonded: Cys186/Cys197, Cys193/Cys206, and Cys208/Cys221. The ZP domain maps to 267–516 (FCKSNTIEVS…SRCAQGCHRR (250 aa)). A glycan (N-linked (GlcNAc...) asparagine) is linked at Asn299. The interval 520-547 (EASTEGEDASGPRSQMLTGGPISIDWED) is disordered.

The protein resides in the nucleus envelope. Its function is as follows. May be involved in hepatocellular function and development. This chain is Oncoprotein-induced transcript 3 protein (OIT3), found in Bos taurus (Bovine).